Consider the following 949-residue polypeptide: Probable transcriptional regulatory protein STB4 (949 aa).

A DNA-binding region (zn(2)-C6 fungal-type) is located at residues cysteine 87–cysteine 113. Composition is skewed to low complexity over residues aspartate 164–serine 178 and serine 200–serine 212. 2 disordered regions span residues aspartate 164–proline 214 and glycine 862–serine 888. Over residues glycine 862 to asparagine 874 the composition is skewed to basic and acidic residues.

The protein resides in the nucleus. In terms of biological role, binds to SIN3. In Saccharomyces cerevisiae (strain ATCC 204508 / S288c) (Baker's yeast), this protein is Probable transcriptional regulatory protein STB4 (STB4).